Here is a 357-residue protein sequence, read N- to C-terminus: Gas vesicle ATPase GvpN (357 aa).

Over residues 22-36 (ATSASKNGGRTTPSA) the composition is skewed to polar residues. The disordered stretch occupies residues 22–43 (ATSASKNGGRTTPSALTPRPRS). 72 to 79 (GPAGTGKT) serves as a coordination point for ATP.

The protein belongs to the CbbQ/NirQ/NorQ/GpvN family. In terms of assembly, forms homodimers, probably interacts with other GV proteins including GvpA.

It localises to the gas vesicle. Its subcellular location is the cytoplasm. The enzyme catalyses ATP + H2O = ADP + phosphate + H(+). In terms of biological role, an ATPase that functions in gas vesicle formation. A minor component of the gas vesicle, also found in soluble extracts. Gas vesicles (GV) are hollow, gas filled proteinaceous nanostructures. During planktonic growth they allow positioning of the organism at a favorable depth for light or nutrient acquisition. The polypeptide is Gas vesicle ATPase GvpN (Ancylobacter aquaticus).